The sequence spans 315 residues: Long form salivary protein D7L1 (315 aa).

Positions 1–18 (MIIVAVLLSFLAHLLVQA) are cleaved as a signal peptide. 2 cysteine pairs are disulfide-bonded: Cys-37-Cys-73 and Cys-69-Cys-128. Residue Trp-55 coordinates thromboxane A2. Trp-58 provides a ligand contact to leukotriene C4. Tyr-70 serves as a coordination point for thromboxane A2. Leukotriene C4 is bound by residues Gly-152 and Lys-170. Position 170 (Lys-170) interacts with thromboxane A2. Cystine bridges form between Cys-178–Cys-211 and Cys-252–Cys-263.

This sequence belongs to the PBP/GOBP family. Distal-lateral and median lobes of female salivary gland (at protein level). Not detected in male salivary gland (at protein level). Expressed in female salivary gland. Not detected in female carcass without salivary glands. Expressed in male salivary gland and other tissues.

It localises to the secreted. In terms of biological role, modulates blood feeding of female mosquitoes on vertebrate species by binding and sequestering different mediators involved in the host response. Binds leukotriene C4, leukotriene D4, leukotriene E4 and stable analogs of thromboxane A2, U-46619 and carbocyclic TXA2. Binds weakly prostaglandins: PGD2, PGE2 and PGF2alpha. Does not bind leukotriene B4, biogenic amines, ADP, platelet activating phospholipid derivative PAF and arachidonic acid. Inhibits agonist-induced smooth muscle contraction. Inhibits platelet aggregation induced by low concentrations of collagen in thromboxane A2-dependent manner. The chain is Long form salivary protein D7L1 from Anopheles stephensi (Indo-Pakistan malaria mosquito).